The primary structure comprises 94 residues: Large ribosomal subunit protein bL28A (94 aa).

A disordered region spans residues 63 to 94 (GHRGRRRAARAGSAPAHFARQAGSSLRTAAIL). Low complexity predominate over residues 72–82 (RAGSAPAHFAR). Polar residues predominate over residues 84–94 (AGSSLRTAAIL).

This sequence belongs to the bacterial ribosomal protein bL28 family.

This is Large ribosomal subunit protein bL28A (rpmB1) from Mycobacterium bovis (strain ATCC BAA-935 / AF2122/97).